The sequence spans 275 residues: MNTKEIVNKYEFKFNKNLGQNFLIDESVLEDIIEGAEINKEDTVIEIGPGVGTLTKELLERAKEVYSIELDGDLIPILQEELKEYNNFTLIHKDALKIDFNELMENKDSIKLVANLPYYVTTPIISRLLTEKCNFKSLTIMIQKEVAERINAEPNCKEYGSLTVLVQYYCNTKIIRKVSPNSFIPRPKVDSIVIKLDRLSEPRVRVKSQKLFFNVVRSSFNMRRKTLWNSLKSLNINKESMENAFERAGIDSKRRGETLSIEEFGKLSDCIYDIL.

6 residues coordinate S-adenosyl-L-methionine: asparagine 21, leucine 23, glycine 48, glutamate 69, aspartate 94, and asparagine 115.

Belongs to the class I-like SAM-binding methyltransferase superfamily. rRNA adenine N(6)-methyltransferase family. RsmA subfamily.

It localises to the cytoplasm. The catalysed reaction is adenosine(1518)/adenosine(1519) in 16S rRNA + 4 S-adenosyl-L-methionine = N(6)-dimethyladenosine(1518)/N(6)-dimethyladenosine(1519) in 16S rRNA + 4 S-adenosyl-L-homocysteine + 4 H(+). Its function is as follows. Specifically dimethylates two adjacent adenosines (A1518 and A1519) in the loop of a conserved hairpin near the 3'-end of 16S rRNA in the 30S particle. May play a critical role in biogenesis of 30S subunits. In Clostridium botulinum (strain Kyoto / Type A2), this protein is Ribosomal RNA small subunit methyltransferase A.